Here is a 292-residue protein sequence, read N- to C-terminus: Acetylglutamate kinase (292 aa).

Substrate contacts are provided by residues 64-65, Arg86, and Asn190; that span reads GG.

Belongs to the acetylglutamate kinase family. ArgB subfamily.

The protein resides in the cytoplasm. The enzyme catalyses N-acetyl-L-glutamate + ATP = N-acetyl-L-glutamyl 5-phosphate + ADP. The protein operates within amino-acid biosynthesis; L-arginine biosynthesis; N(2)-acetyl-L-ornithine from L-glutamate: step 2/4. Functionally, catalyzes the ATP-dependent phosphorylation of N-acetyl-L-glutamate. The sequence is that of Acetylglutamate kinase from Geotalea uraniireducens (strain Rf4) (Geobacter uraniireducens).